Here is a 209-residue protein sequence, read N- to C-terminus: Small ribosomal subunit protein uS3 (209 aa).

The 70-residue stretch at 38-107 (IRKVIKSKYA…RFIVNVEEIK (70 aa)) folds into the KH type-2 domain.

This sequence belongs to the universal ribosomal protein uS3 family. Part of the 30S ribosomal subunit. Forms a tight complex with proteins S10 and S14.

Binds the lower part of the 30S subunit head. Binds mRNA in the 70S ribosome, positioning it for translation. In Thermosipho melanesiensis (strain DSM 12029 / CIP 104789 / BI429), this protein is Small ribosomal subunit protein uS3.